The primary structure comprises 351 residues: Spindolin (351 aa).

The first 20 residues, Met-1 to Gly-20, serve as a signal peptide directing secretion.

In terms of assembly, homodimer; disulfide-linked.

In terms of biological role, this protein is a spindle body protein. This Lepidoptera (butterflies and moths) protein is Spindolin.